The primary structure comprises 288 residues: Adenylate kinase (288 aa).

65–70 (GVGKGT) provides a ligand contact to ATP. Residues 85–114 (ATGDLVRDELKSSGPLSKQLAEIVNQGKLV) form an NMP region. Residues T86, R91, 112 to 114 (KLV), 142 to 145 (GFPR), and Q149 each bind AMP. Residues 178–226 (GRRICSECGKNFNVASIDVAGENGAPRISMARLNPPFTVCFKLITRADD) form an LID region. R179 contributes to the ATP binding site. Residues R223 and R234 each contribute to the AMP site. G262 is a binding site for ATP.

Belongs to the adenylate kinase family. As to quaternary structure, monomer.

The protein localises to the cytoplasm. The catalysed reaction is AMP + ATP = 2 ADP. Functionally, catalyzes the reversible transfer of the terminal phosphate group between ATP and AMP. Plays an important role in cellular energy homeostasis and in adenine nucleotide metabolism. The polypeptide is Adenylate kinase (ADK) (Solanum tuberosum (Potato)).